Consider the following 736-residue polypeptide: NADPH--cytochrome P450 reductase (736 aa).

Met1 is a topological domain (lumenal). Residues 2 to 24 (AVSSSSDVIVLSVGIILAALYLF) traverse the membrane as a helical segment. Residues 25–736 (REQIFSAAKP…RNRLLLDVWS (712 aa)) lie on the Cytoplasmic side of the membrane. A Flavodoxin-like domain is found at 66–216 (IVIFYGSQTG…DYLEWKDGMW (151 aa)). Residues 72–77 (SQTGTA), 123–126 (ATYG), 165–174 (LGNKTYEHYN), and Asp200 each bind FMN. The FAD-binding FR-type domain maps to 269–546 (KNPYPAPIIA…EGPRGAYKQG (278 aa)). Position 289 (Arg289) interacts with NADP(+). FAD contacts are provided by residues 456-459 (RYYS), 474-476 (TVV), Tyr480, and 495-498 (GVGS). NADP(+) is bound by residues Thr577, 648–649 (SR), and 659–663 (KIYVQ). Trp735 is an FAD binding site.

This sequence belongs to the NADPH--cytochrome P450 reductase family. It in the N-terminal section; belongs to the flavodoxin family. The protein in the C-terminal section; belongs to the flavoprotein pyridine nucleotide cytochrome reductase family. FAD serves as cofactor. FMN is required as a cofactor.

It localises to the endoplasmic reticulum membrane. The protein localises to the mitochondrion outer membrane. The protein resides in the cell membrane. The catalysed reaction is 2 oxidized [cytochrome P450] + NADPH = 2 reduced [cytochrome P450] + NADP(+) + H(+). In terms of biological role, this enzyme is required for electron transfer from NADP to cytochrome P450 in microsomes. It can also provide electron transfer to heme oxygenase and cytochrome B5. Involved in ergosterol biosynthesis. This Phanerodontia chrysosporium (White-rot fungus) protein is NADPH--cytochrome P450 reductase (CPR).